The following is a 240-amino-acid chain: Large ribosomal subunit protein bL25 (240 aa).

Residues 1 to 23 form a disordered region; it reads MATVKELKATARPKAGKGAARAE. Residues 10–19 are compositionally biased toward low complexity; that stretch reads TARPKAGKGA.

The protein belongs to the bacterial ribosomal protein bL25 family. CTC subfamily. As to quaternary structure, part of the 50S ribosomal subunit; part of the 5S rRNA/L5/L18/L25 subcomplex. Contacts the 5S rRNA. Binds to the 5S rRNA independently of L5 and L18.

Its function is as follows. This is one of the proteins that binds to the 5S RNA in the ribosome where it forms part of the central protuberance. The protein is Large ribosomal subunit protein bL25 of Afipia carboxidovorans (strain ATCC 49405 / DSM 1227 / KCTC 32145 / OM5) (Oligotropha carboxidovorans).